A 347-amino-acid chain; its full sequence is Protein RecA (347 aa).

Position 67 to 74 (67 to 74 (GPESSGKT)) interacts with ATP.

The protein belongs to the RecA family.

It localises to the cytoplasm. Functionally, can catalyze the hydrolysis of ATP in the presence of single-stranded DNA, the ATP-dependent uptake of single-stranded DNA by duplex DNA, and the ATP-dependent hybridization of homologous single-stranded DNAs. It interacts with LexA causing its activation and leading to its autocatalytic cleavage. The protein is Protein RecA of Paenarthrobacter aurescens (strain TC1).